A 155-amino-acid polypeptide reads, in one-letter code: Endoribonuclease YbeY (155 aa).

Residues H114, H118, and H124 each contribute to the Zn(2+) site.

It belongs to the endoribonuclease YbeY family. Zn(2+) serves as cofactor.

Its subcellular location is the cytoplasm. Single strand-specific metallo-endoribonuclease involved in late-stage 70S ribosome quality control and in maturation of the 3' terminus of the 16S rRNA. The chain is Endoribonuclease YbeY from Escherichia coli O1:K1 / APEC.